A 429-amino-acid chain; its full sequence is GTPase Obg (429 aa).

An Obg domain is found at 1–158; sequence MFVDQVKIYV…RNVQLELKVL (158 aa). Positions 124 to 145 are disordered; that stretch reads RGNKRFATPANPAPELSENGEP. An OBG-type G domain is found at 159 to 329; that stretch reads ADVGLVGFPS…LLLAIADKLE (171 aa). Residues 165-172, 190-194, 212-215, 282-285, and 310-312 each bind GTP; these read GFPSVGKS, FTTIV, DLPG, NKMD, and SAV. Mg(2+) is bound by residues S172 and T192. The OCT domain occupies 351-429; that stretch reads KYVAEEPDFE…LLDYEFEFMD (79 aa).

Belongs to the TRAFAC class OBG-HflX-like GTPase superfamily. OBG GTPase family. In terms of assembly, monomer. Mg(2+) serves as cofactor.

Its subcellular location is the cytoplasm. Functionally, an essential GTPase which binds GTP, GDP and possibly (p)ppGpp with moderate affinity, with high nucleotide exchange rates and a fairly low GTP hydrolysis rate. Plays a role in control of the cell cycle, stress response, ribosome biogenesis and in those bacteria that undergo differentiation, in morphogenesis control. This chain is GTPase Obg, found in Listeria innocua serovar 6a (strain ATCC BAA-680 / CLIP 11262).